Here is a 617-residue protein sequence, read N- to C-terminus: Dihydroxy-acid dehydratase (617 aa).

A Mg(2+)-binding site is contributed by Asp81. [2Fe-2S] cluster is bound at residue Cys122. Asp123 and Lys124 together coordinate Mg(2+). Position 124 is an N6-carboxylysine (Lys124). Cys195 lines the [2Fe-2S] cluster pocket. Glu490 is a binding site for Mg(2+). Ser516 acts as the Proton acceptor in catalysis.

It belongs to the IlvD/Edd family. In terms of assembly, homodimer. [2Fe-2S] cluster is required as a cofactor. The cofactor is Mg(2+).

The catalysed reaction is (2R)-2,3-dihydroxy-3-methylbutanoate = 3-methyl-2-oxobutanoate + H2O. The enzyme catalyses (2R,3R)-2,3-dihydroxy-3-methylpentanoate = (S)-3-methyl-2-oxopentanoate + H2O. It functions in the pathway amino-acid biosynthesis; L-isoleucine biosynthesis; L-isoleucine from 2-oxobutanoate: step 3/4. It participates in amino-acid biosynthesis; L-valine biosynthesis; L-valine from pyruvate: step 3/4. Functions in the biosynthesis of branched-chain amino acids. Catalyzes the dehydration of (2R,3R)-2,3-dihydroxy-3-methylpentanoate (2,3-dihydroxy-3-methylvalerate) into 2-oxo-3-methylpentanoate (2-oxo-3-methylvalerate) and of (2R)-2,3-dihydroxy-3-methylbutanoate (2,3-dihydroxyisovalerate) into 2-oxo-3-methylbutanoate (2-oxoisovalerate), the penultimate precursor to L-isoleucine and L-valine, respectively. The protein is Dihydroxy-acid dehydratase of Acidiphilium cryptum (strain JF-5).